The primary structure comprises 230 residues: Large ribosomal subunit protein uL1 (230 aa).

Belongs to the universal ribosomal protein uL1 family. Part of the 50S ribosomal subunit.

Its function is as follows. Binds directly to 23S rRNA. The L1 stalk is quite mobile in the ribosome, and is involved in E site tRNA release. Functionally, protein L1 is also a translational repressor protein, it controls the translation of the L11 operon by binding to its mRNA. In Bradyrhizobium sp. (strain ORS 278), this protein is Large ribosomal subunit protein uL1.